The primary structure comprises 257 residues: Outer membrane protein Omp26La (257 aa).

The signal sequence occupies residues 1-19 (MKKIALFITASLIAGNTLA).

Belongs to the MipA/OmpV family.

The protein localises to the cell outer membrane. The polypeptide is Outer membrane protein Omp26La (Vibrio anguillarum (Listonella anguillarum)).